A 121-amino-acid polypeptide reads, in one-letter code: NAD(P)H-quinone oxidoreductase subunit 3, chloroplastic (121 aa).

3 helical membrane passes run 10–30 (FFIFLLLASVIPILAFSISKF), 65–85 (MFALVFVIFDVETVFLYPWAM), and 90–110 (LGLSAFIEALVFVFILIIGLV).

The protein belongs to the complex I subunit 3 family. NDH is composed of at least 16 different subunits, 5 of which are encoded in the nucleus.

The protein resides in the plastid. It is found in the chloroplast thylakoid membrane. The catalysed reaction is a plastoquinone + NADH + (n+1) H(+)(in) = a plastoquinol + NAD(+) + n H(+)(out). It catalyses the reaction a plastoquinone + NADPH + (n+1) H(+)(in) = a plastoquinol + NADP(+) + n H(+)(out). In terms of biological role, NDH shuttles electrons from NAD(P)H:plastoquinone, via FMN and iron-sulfur (Fe-S) centers, to quinones in the photosynthetic chain and possibly in a chloroplast respiratory chain. The immediate electron acceptor for the enzyme in this species is believed to be plastoquinone. Couples the redox reaction to proton translocation, and thus conserves the redox energy in a proton gradient. The protein is NAD(P)H-quinone oxidoreductase subunit 3, chloroplastic of Physcomitrium patens (Spreading-leaved earth moss).